Reading from the N-terminus, the 513-residue chain is Bifunctional purine biosynthesis protein PurH (513 aa).

Positions 1–145 (MNKRAIISVY…KNFKYTTVIV (145 aa)) constitute an MGS-like domain.

The protein belongs to the PurH family.

The enzyme catalyses (6R)-10-formyltetrahydrofolate + 5-amino-1-(5-phospho-beta-D-ribosyl)imidazole-4-carboxamide = 5-formamido-1-(5-phospho-D-ribosyl)imidazole-4-carboxamide + (6S)-5,6,7,8-tetrahydrofolate. It carries out the reaction IMP + H2O = 5-formamido-1-(5-phospho-D-ribosyl)imidazole-4-carboxamide. It functions in the pathway purine metabolism; IMP biosynthesis via de novo pathway; 5-formamido-1-(5-phospho-D-ribosyl)imidazole-4-carboxamide from 5-amino-1-(5-phospho-D-ribosyl)imidazole-4-carboxamide (10-formyl THF route): step 1/1. It participates in purine metabolism; IMP biosynthesis via de novo pathway; IMP from 5-formamido-1-(5-phospho-D-ribosyl)imidazole-4-carboxamide: step 1/1. The sequence is that of Bifunctional purine biosynthesis protein PurH from Caldicellulosiruptor bescii (strain ATCC BAA-1888 / DSM 6725 / KCTC 15123 / Z-1320) (Anaerocellum thermophilum).